The primary structure comprises 88 residues: Small ribosomal subunit protein uS17 (88 aa).

Belongs to the universal ribosomal protein uS17 family. Part of the 30S ribosomal subunit.

Functionally, one of the primary rRNA binding proteins, it binds specifically to the 5'-end of 16S ribosomal RNA. The sequence is that of Small ribosomal subunit protein uS17 from Ruthia magnifica subsp. Calyptogena magnifica.